The chain runs to 221 residues: Sugar transporter SWEET1 (221 aa).

Transmembrane regions (helical) follow at residues 3 to 23, 43 to 63, 68 to 88, 102 to 122, 129 to 149, 160 to 180, and 186 to 206; these read AGGV…LGMF, QFLP…YGVL, TLII…LAYL, ATLL…VPDL, LGLF…ADLA, LSFS…IYGF, and YITV…GLFC. In terms of domain architecture, MtN3/slv 1 spans 10–94; sequence FLSSACVLFT…LAYLHYSPQK (85 aa). The 86-residue stretch at 127 to 212 folds into the MtN3/slv 2 domain; sequence QQLGLFCSVF…GLFCKYPPEQ (86 aa). Residues 149–221 form a mediates interaction with TRPV2 region; it reads AKIVQTKSTQ…QDRKYRLLQT (73 aa).

This sequence belongs to the SWEET sugar transporter family. In terms of assembly, interacts with TRPV2; the interaction probably occurs intracellularly and depends on TRPV2 N-glycosylation. As to expression, expressed at high levels in lung, placenta, spleen and thymus, at intermediate levels in brain, heart, kidney and testis, and at low levels in bone marrow, liver and lymph node. Within the thymus expression is highest in non-lymphoid cells.

It localises to the golgi apparatus membrane. Its subcellular location is the cell membrane. In terms of biological role, mediates sugar transport across membranes. May regulate the expression of RAG1 a gene involved in V(D)J recombination. In Mus musculus (Mouse), this protein is Sugar transporter SWEET1 (Slc50a1).